A 29-amino-acid chain; its full sequence is U-limacoditoxin(12)-Dv72 (29 aa).

The N-terminal stretch at 1-15 (MNFGMLKLLTVLIIC) is a signal peptide. Asparagine 27 is modified (asparagine amide).

Belongs to the limacoditoxin-12 family. As to expression, expressed by the venom secretory cell of the spine. The spine is a cuticular structure containing a single large nucleated venom-secreting cell at its base. It is an independent unit capable of producing, storing and injecting venom. On the back of D.vulnerans caterpillars, spines are grouped together by 50 to 100 to form scoli, of which there are eight in D.vulnerans.

The protein resides in the secreted. In terms of biological role, probable toxin. Does not show insecticidal, antimicrobial and antiparasitic activities. Does not induce increase in intracellular calcium in mouse DRG neurons, suggesting that it does not induce pain. The protein is U-limacoditoxin(12)-Dv72 of Doratifera vulnerans (Mottled cup moth).